We begin with the raw amino-acid sequence, 1220 residues long: Plasma membrane calcium-transporting ATPase 1 (1220 aa).

The residue at position 2 (Gly-2) is an N-acetylglycine. Residues 2–105 lie on the Cytoplasmic side of the membrane; sequence GDMANNSVAY…KTFLQLVWEA (104 aa). Ser-8 and Ser-17 each carry phosphoserine. Residues 106 to 126 traverse the membrane as a helical segment; sequence LQDVTLIILEIAAIVSLGLSF. At 127 to 154 the chain is on the extracellular side; it reads YQPPEGDNALCGEVSVGEEEGEGETGWI. Residues 155-175 traverse the membrane as a helical segment; it reads EGAAILLSVVCVVLVTAFNDW. Topologically, residues 176–366 are cytoplasmic; that stretch reads SKEKQFRGLQ…KEKSVLQGKL (191 aa). Residues 297 to 356 form a disordered region; the sequence is EEEKKDEKKKEKKNKKQDGAIENRNKAKAQDGAAMEMQPLKSEEGGDGDEKDKKKANLPK. Composition is skewed to basic and acidic residues over residues 312-325 and 337-356; these read KQDG…KAKA and KSEE…NLPK. At Ser-338 the chain carries Phosphoserine. Residues 367–386 form a helical membrane-spanning segment; sequence TKLAVQIGKAGLLMSAITVI. Topologically, residues 387–418 are extracellular; that stretch reads ILVLYFVIDTFWVQKRPWLAECTPIYIQYFVK. A helical transmembrane segment spans residues 419-439; that stretch reads FFIIGVTVLVVAVPEGLPLAV. Residues 440-855 lie on the Cytoplasmic side of the membrane; that stretch reads TISLAYSVKK…RNVYDSISKF (416 aa). Asp-475 acts as the 4-aspartylphosphate intermediate in catalysis. Residues Asp-475, Thr-477, and Asp-797 each contribute to the Mg(2+) site. A helical membrane pass occupies residues 856–876; that stretch reads LQFQLTVNVVAVIVAFTGACI. Topologically, residues 877–882 are extracellular; that stretch reads TQDSPL. A helical transmembrane segment spans residues 883 to 903; the sequence is KAVQMLWVNLIMDTLASLALA. Topologically, residues 904 to 927 are cytoplasmic; sequence TEPPTESLLLRKPYGRNKPLISRT. The chain crosses the membrane as a helical span at residues 928 to 948; the sequence is MMKNILGHAFYQLVVVFTLLF. The Extracellular segment spans residues 949-971; sequence AGEKFFDIDSGRNAPLHAPPSEH. Residues 972 to 991 form a helical membrane-spanning segment; that stretch reads YTIVFNTFVLMQLFNEINAR. Residues 992–1005 lie on the Cytoplasmic side of the membrane; it reads KIHGERNVFEGIFN. Residues 1006–1027 form a helical membrane-spanning segment; it reads NAIFCTIVLGTFVVQIIIVQFG. Topologically, residues 1028 to 1039 are extracellular; sequence GKPFSCSELSIE. Residues 1040–1060 traverse the membrane as a helical segment; it reads QWLWSIFLGMGTLLWGQLIST. Residues 1061-1220 lie on the Cytoplasmic side of the membrane; the sequence is IPTSRLKFLK…SPLHSLETSL (160 aa). Residues 1100 to 1117 are calmodulin-binding subdomain A; sequence LRRGQILWFRGLNRIQTQ. At Thr-1116 the chain carries Phosphothreonine; by PKC. The interval 1118–1220 is required for basolateral membrane targeting; it reads IRVVNAFRSS…SPLHSLETSL (103 aa). Phosphoserine is present on residues Ser-1140 and Ser-1155. The tract at residues 1160-1220 is disordered; that stretch reads PLIDDTDAED…SPLHSLETSL (61 aa). Residue Thr-1165 is modified to Phosphothreonine. A Phosphoserine; by PKA modification is found at Ser-1178. At Ser-1182 the chain carries Phosphoserine. The segment covering 1200 to 1220 has biased composition (polar residues); that stretch reads MNKSATSSSPGSPLHSLETSL.

The protein belongs to the cation transport ATPase (P-type) (TC 3.A.3) family. Type IIB subfamily. In terms of assembly, monomer. Dimer. Oligomer. Calmodulin binding. Interacts with PDZD11. Interacts with SLC35G1 and STIM1; inhibits calcium-transporting ATPase activity after store depletion. Interacts with YWHAE; interacts with the monomeric and dimeric forms of the YWHAE but prefer the monomer form; this interaction inhibits calcium-transporting ATPase activity. Interacts with NPTN; this interaction stabilizes ATP2B1 and increases ATPase activity; this interaction controls T cell calcium homeostasis following T cell activation. Interacts with EPB41; regulates small intestinal calcium absorption through regulation of membrane expression of ATP2B1. In terms of tissue distribution, isoform B: Ubiquitously expressed. Isoform C: Found in brain cortex, skeletal muscle and heart muscle. Isoform D: Has only been found in fetal skeletal muscle. Isoform K: Found in small intestine and liver. Abundantly expressed in the endometrial epithelial cells and glandular epithelial cells in early-proliferative phase and early-secretory phases.

The protein resides in the cell membrane. It is found in the basolateral cell membrane. It localises to the synapse. Its subcellular location is the presynaptic cell membrane. The protein localises to the cytoplasmic vesicle. The protein resides in the secretory vesicle. It is found in the synaptic vesicle membrane. It catalyses the reaction Ca(2+)(in) + ATP + H2O = Ca(2+)(out) + ADP + phosphate + H(+). In terms of biological role, catalyzes the hydrolysis of ATP coupled with the transport of calcium from the cytoplasm to the extracellular space thereby maintaining intracellular calcium homeostasis. Plays a role in blood pressure regulation through regulation of intracellular calcium concentration and nitric oxide production leading to regulation of vascular smooth muscle cells vasoconstriction. Positively regulates bone mineralization through absorption of calcium from the intestine. Plays dual roles in osteoclast differentiation and survival by regulating RANKL-induced calcium oscillations in preosteoclasts and mediating calcium extrusion in mature osteoclasts. Regulates insulin sensitivity through calcium/calmodulin signaling pathway by regulating AKT1 activation and NOS3 activation in endothelial cells. May play a role in synaptic transmission by modulating calcium and proton dynamics at the synaptic vesicles. The chain is Plasma membrane calcium-transporting ATPase 1 from Homo sapiens (Human).